Consider the following 534-residue polypeptide: Glucans biosynthesis protein D (534 aa).

The tat-type signal signal peptide spans 1 to 28 (MYRRDFLKSVTAAWVAFGLPNPLGGAFA).

The protein belongs to the OpgD/OpgG family. Predicted to be exported by the Tat system. The position of the signal peptide cleavage has not been experimentally proven.

It is found in the periplasm. It participates in glycan metabolism; osmoregulated periplasmic glucan (OPG) biosynthesis. Probably involved in the control of the structural glucose backbone of osmoregulated periplasmic glucans (OPGs). In Xylella fastidiosa (strain M23), this protein is Glucans biosynthesis protein D.